Consider the following 292-residue polypeptide: uncharacterized protein (292 aa).

Residues 175–197 (VLNFYFTALPYAIDGIISGIGVF) traverse the membrane as a helical segment.

Its subcellular location is the membrane. This is an uncharacterized protein from Methanocaldococcus jannaschii (strain ATCC 43067 / DSM 2661 / JAL-1 / JCM 10045 / NBRC 100440) (Methanococcus jannaschii).